We begin with the raw amino-acid sequence, 106 residues long: Large ribosomal subunit protein uL24 (106 aa).

It belongs to the universal ribosomal protein uL24 family. As to quaternary structure, part of the 50S ribosomal subunit.

Functionally, one of two assembly initiator proteins, it binds directly to the 5'-end of the 23S rRNA, where it nucleates assembly of the 50S subunit. Its function is as follows. One of the proteins that surrounds the polypeptide exit tunnel on the outside of the subunit. In Clostridium acetobutylicum (strain ATCC 824 / DSM 792 / JCM 1419 / IAM 19013 / LMG 5710 / NBRC 13948 / NRRL B-527 / VKM B-1787 / 2291 / W), this protein is Large ribosomal subunit protein uL24.